Reading from the N-terminus, the 4061-residue chain is MTKIQEQEPIAVIGMACRFPGGSDTPSKLWELLQKPRDLSKRVPEDRFDSTGFFHENGTHHGATDCRDAYFLEEDVTRFDNAFFNIQPGEAEALDPQQRLLMETVYESLCTAGQTVEGLRGSRTAMYVGLMCDDWSQMTSRDWDLVPTYTATGTSRAVMSNRISYFFDWHGPSMTVDTACSSSLVAVHQGVTSLRNGEAPIAVAAGANLILAPGMWIAESNLHMLSPTGTSKMWDAAADGYARGEGIAAVVLKPLSAALRDGDNIDCIIRETGVNQDGRTAGLTMPSNTAQSQLIRDTYRRAGLDINDPKDRPQFFHAHGTGTPAGDPQEAEAISRAFFDKSDVKDPLYVGSIKTVIGQADIVGWWDSPPPPNRHTEGTAGLASLIGTTLAMKHGTIPQNLHFNTLSDRVAPFCAHLRVPAKSLPWPSPVTGQPRRASINSFDQWKKERTADSDFLPQIGFGGTNAHAIIEGYEPEQPPHLVTGPTTTKTSLFTPLTISATSSSSLRSMLSDLQKYLVNHPDTNLRDVAYTLQSRRSTFSYRRSVVCRSADDAVNRIEGLLVDTSAENGLNSRYADVSNPSSILGVFTGQGAQWPRMGAWLIEESPFVAQRLDELDEALATLPEGDRPDWKLSEQLLADASASRLSEAAIAQPLCTAVQVVLVDLTRAAGIHLRAVVGHSSGEIGAAYAAGFLSATDAIRVAYYRGVYAKLSRSPKDESIKGAMMAAGTSYEDALELCALEEFEGRLQVAARNSSSSVTLSGDEDAIDEVVEILKDEGRFARKLKVDTAYHSHHMQACAAPYLAALERANITAKDGNGTTWYSSVVDGQVMTKNIIQQSQYWVDNMTNAVLFAPAVTAAVAQAGPFDIAIEFGPHPALKGPCLDTVEEAAGSKIPYTGLLARQKNDVEELLAALGFLWTHLGAGSVNFDGFENAISGASSPRRLVSTLPAYPFDHSRSFYTLTRFSGGHQNMHSPLHPLLGRRCVETEADDEVSWRNILRSSENIWLQGHALQGQAVFPAMGYIAMAVEAAASLAGPDRRLGLISLEDVVIGRAMAFGDESVGMEAKVALKVSHFADDELRGKITCHSGLPHDSATPLALNFSATVNVTFHEPEAESLPAVRTDEINLANAEPQRLYSQFNKLGYNYSPPFTGVTSVHRKKGFATGTIEDISGDNWEDQLIVHPGLLDSALQTAFAAYCHPHDNRFWTLHVPTAIRSIVINPYFTDRGAGRHRQFEYQSSCRDGLESPVEADINVFAGQGQPHAFVQFESVRVQPFSVAGPQDDALIFSRFDYKLAEPDATVVVEGEGLPPPDADVIFQTIERVGFFYLRRIHETITPAEAAATLPHYKLLIEFTGRVVPRVAAGEHPTVPKEAMGDTTAYINSLLAKYRHRSDMQLIGIVGENIIPEIRRSGSMIEHMLQDGVLDRFYEEGFEYANIWIARVIAQIAHRHPRMDIFEVGAGTGGSTRAILPKLGDAFASYTFTDLSAGFFERANDRFINYADRMIYSTYNMENSPAEQGFEEGSYDVVLASNALHATGKLDETISNARRLLRPGGYLVLVEIMGNDFLGIGCSMGGLPGWWAGAAVDPTRSDGPCLNVNQWDALVRRHGFNGVETHTPLDRKLQWYAVLVCRAVDDRVVSLREPLSTTSPVPVSAADELVVVGGRTPAVASLVKESTELLKTRYTTITHIETLEEFNTTPLSQGSSVLSLTELDEQFLEVRTEAKLEALKTLWRNGRTISWVTRGARKENPHTSSMVGLARVMRYEYPHLNLQIVDYDRLPESKAIAESLLRLELGKTWESENLLWTVEPELHYVDGQLFIPRLYPYDEANKRWNTSRRTVTTEVDPHETTVVLEPSTDGNTVKPCAISPLRVRSDPPRRSSGKQITIRLQQSLLQSIKVGEAGFFTLCAGTDEESGESLVAFVDTPAESSVQVPVEWTVKTTEAADGSTALGYAATHLLAQSIIAAAVPRFGTLVVHEASSLLKDALDKEAAAEGIQVVFTTAEKTGKVDDGTVHIHQRLPARLVRKLLPRDVSVFVNLSPAPGASELLRSCLARHTATATVEDFVRIQPHISPNADIWEAGQALKTTWNAVTRHRRRTSNLEISKVISLNEANSVNPVEGPLTVVDWNTKSVEVALRPIDHGTIFRADGTYFLLGLSGELGQSLCSWMVSHGARNVVLSSRSPKVDPRYIEELAAQGANVRALACDITRRESLRACYDTIRAEMPPIIGVANGAMILEDVMFDDLEFESQERAMPPKVEGSLYLDELFYDTPLDFFVLLTSLAHIGGNTGQSTYVMANLFMVALAAQRRDIRGVVGSDMAIGSVTGMGFFERSALDKDHFSRMGYRNMSEQDLHTQFAEAILAGKPGAKGIPEVAIGLQPYRDTPNIQAQLRMDPRFKHYLLQDRGANTQGQAGGSQGNAKPRVRLASVTTRAEAIKVVFDTFVDRLKRILLMSATEVIDPMVSLVELGADSIMAVDVRGWFLKELDVDVPVLKILGPGETIALLVEEAVDKLPVDIVDISKLEHGGEPDLTQTAPAPKPEPVRQPELPPQPTSAASSSDTGSDSSPTSNSVSETQTGTPLETPMSTTEAGYFKQESQQLQQKLQKHQEQTSQSWRQKVVESSTEHTEQMTFGQNRFWFLTHYVDDPTTFNIAYVGKLTGRIRVDDLSKAVQAAAQRHESLRTRFFWSDDDTKTPMQGILSNTLVRLETATIKSAAEAAQELDEMRAYVWDLGDWVPLRMRLLSLSDTEHFLLIGTHHISMDGHSFSVLMLDIQQAYNSPGQRLAPLPVASQARAFGAHQRLSYETGKFKTAIEHHRSQLPAADLVRPIELFSFARTQVRPALDHYGTHVAKTHLPLATAAKLKQLARGHRATAFHAYLAGLQALLFRLLPAATTDKVFVGLADANRLDSKFMGSIGNFLNVLPVRFDRADRQTFGQAMEVARDRAYGGLKHSALPFDLLLDELEVPRSNAWAPVFQIFMDYRLVVKEHANKDWIGCKISEENWHTSRSGYDVALEIMEGHDGAMVAMHVQKALYDASAADLLLKTYVNVLNQVAAKGDKFVVKELATWDTESEQKGLATGHGPNLTLEWPATVAHRIDQVIADHPDAVALKDGHGRSLTYKEMDERVESIAHTLREHVPRTDKQPIVGVLQTPSADWMCSLLAILRFGGIYLPLDLRNGAPRLKSNVDAARPVAVLTDASSAGQVTDVCHHSDVVVINVSHLPASTGLPRMETTAATADGSAYIIFTSGSTGEPKGIVVKHSGLRANLEGYHREWAIDTMSDVVLQQTALSFDASLVQIFAALTTGGSLFVVPADARGDPSEVTKLMVENGVTMTQATPSEYDMWFRFAPETLHRCSTWKAAWFGGERAGPSVLDGFRKACRAIPSLRVFTSYGPTESTISAMKGEADVRNPDLRVPVPGRLLPNYAAYIVDDTLQPVPTGVPGEIVLGGAGVGANEYLNQKDMTDKQFPRDKFTSRGDSGWGRMYRTGDYGRLDARGYLTVEGRIAGDTQVKLRGFRIELAEIERVMVKEADGTISDAVVTLRGEGEQEGFLAAHVVFNGKIQGDKETGEAVDKLRARLPLCLPQYMCPAVIVPLDSLPLTSHHKVDRKALQTLELPKVEASVAEQLQNLTATERTLADLWDSLLPPRAAADALGPRSHFFSSGGNSLLLVKLQAAIKRDFGDAPRLSKLMSAPELGSMAALLDDGVGRVNWDKEIALDDELHGASWRARVTPAGADGISVLITGATGSLGRRITQRLANDNRVSRVVCLVRPVDGRDMANVFPGIGDKVQIMPADLPTLPADSDIPDIDVVLHCAADRNFWDGYHAVKPVNVDTAKALARLCLRRGATLHVLSSGAMAAYEGDDKTPGGSLPRPTPDDGYLSSKWVAERYLAGVARETGLPLTAHRPTRVSDAEALRVEQMGKTEMGMAKIMLSLSEKLNVRPDFTNLGGIIDLSPLEDAVEAVTQAVTTNIREEASGIRIINHAGTARMRTNALAAHAEELFGRAENSAVMGLPSVSALHWVGLAKRAGLFEWFFTAQDLVVEDGEGNTIASRR.

A Ketosynthase family 3 (KS3) domain is found at 7–472; the sequence is QEPIAVIGMA…GTNAHAIIEG (466 aa). The active site involves C180. The interval 586–911 is malonyl-CoA:ACP transacylase (MAT) domain; that stretch reads VFTGQGAQWP…RQKNDVEELL (326 aa). The tract at residues 977 to 1113 is N-terminal hotdog fold; the sequence is HPLLGRRCVE…ATVNVTFHEP (137 aa). A dehydratase (DH) domain region spans residues 977-1280; it reads HPLLGRRCVE…VRVQPFSVAG (304 aa). The region spanning 977 to 1282 is the PKS/mFAS DH domain; it reads HPLLGRRCVE…VQPFSVAGPQ (306 aa). The Proton acceptor; for dehydratase activity role is filled by H1010. Positions 1128–1282 are C-terminal hotdog fold; it reads LANAEPQRLY…VQPFSVAGPQ (155 aa). The active-site Proton donor; for dehydratase activity is D1188. The methyltransferase (MT) domain stretch occupies residues 1425–1619; sequence LDRFYEEGFE…GFNGVETHTP (195 aa). Residues 2153-2325 are ketoreductase (KR) domain; the sequence is TYFLLGLSGE…GVVGSDMAIG (173 aa). One can recognise a Carrier 1 domain in the interval 2437–2516; sequence EAIKVVFDTF…LLVEEAVDKL (80 aa). At S2475 the chain carries O-(pantetheine 4'-phosphoryl)serine. The tract at residues 2527–2617 is disordered; it reads EHGGEPDLTQ…QKHQEQTSQS (91 aa). A compositionally biased stretch (low complexity) spans 2556–2576; it reads TSAASSSDTGSDSSPTSNSVS. Residues 2577 to 2592 are compositionally biased toward polar residues; the sequence is ETQTGTPLETPMSTTE. The tract at residues 2632 to 3077 is condensation (C) domain; that stretch reads QMTFGQNRFW…ELATWDTESE (446 aa). An adenylation (A) (KR) domain region spans residues 3103–3510; that stretch reads QVIADHPDAV…RGYLTVEGRI (408 aa). The Carrier 2 domain maps to 3633-3712; that stretch reads QNLTATERTL…SMAALLDDGV (80 aa). An O-(pantetheine 4'-phosphoryl)serine modification is found at S3672. A reductase (RED) domain region spans residues 3813-3969; sequence DIDVVLHCAA…LSPLEDAVEA (157 aa).

This sequence in the C-terminal section; belongs to the NRP synthetase family.

The enzyme catalyses (2S,4S)-4-hydroxy-4-methylglutamate + 8 malonyl-CoA + 3 S-adenosyl-L-methionine + ATP + 8 NADPH + 11 H(+) = (2S)-3-[(2S)-3,5-dioxo-4-[(2E,4R,6R,8E,10E,12E)-4,6,12-trimethyltetradeca-2,8,10,12-tetraenoyl]pyrrolidin-2-yl]-2-hydroxy-2-methylpropanoate + AMP + 3 S-adenosyl-L-homocysteine + 8 CO2 + diphosphate + 8 NADP(+) + 8 CoA + 6 H2O. It participates in secondary metabolite biosynthesis. Functionally, hybrid PKS-NRPS synthetase; part of the gene cluster that mediates the biosynthesis of the tetramic acids Sch210971 and Sch210972, potential anti-HIV fungal natural product that contain a decalin core. The PKS module of tasS together with the enoylreductase tasC catalyze the formation of the polyketide unit which is then conjugated to 4-hydroxyl-4-methyl glutamate (HMG) by the condensation domain of the tasS NRPS module. One unique structural feature of Sch210971 and Sch210972 is the tetramic acid motif proposed to be derived from the non-proteinogenic amino acid HMG, by a Dieckmann-type condensation catalyzed by the reductase domain of tasS. The aldolase tasA catalyzes the aldol condensation of 2 molecules of pyruvic acid to yield the intermediate 4-hydroxyl-4-methyl-2-oxoglutarate (HMOG), which can then be stereoselectively transaminated, may be by tasG, to form HMG. The Diels-Alderase tas3 then uses the Dieckmann product of tasS as substrate and catalyzes the Diels-Alder cycloaddition to form the decalin ring of Sch210971 and Sch210972. The protein is Hybrid PKS-NRPS synthetase tasS of Hapsidospora irregularis.